Consider the following 235-residue polypeptide: Large ribosomal subunit protein uL1 (235 aa).

The protein belongs to the universal ribosomal protein uL1 family. As to quaternary structure, part of the 50S ribosomal subunit.

Its function is as follows. Binds directly to 23S rRNA. The L1 stalk is quite mobile in the ribosome, and is involved in E site tRNA release. Functionally, protein L1 is also a translational repressor protein, it controls the translation of the L11 operon by binding to its mRNA. The sequence is that of Large ribosomal subunit protein uL1 from Pseudarthrobacter chlorophenolicus (strain ATCC 700700 / DSM 12829 / CIP 107037 / JCM 12360 / KCTC 9906 / NCIMB 13794 / A6) (Arthrobacter chlorophenolicus).